A 642-amino-acid chain; its full sequence is Arginine--tRNA ligase, chloroplastic/mitochondrial (642 aa).

Residues 1-53 (MFIFPKDENRRETLTTKLRFSADHLTFTTVTEKLRATAWRFAFSSRAKSVVAM) constitute a chloroplast and mitochondrion transit peptide. Ala54 is subject to N-acetylalanine. Residues 190–201 (PNIAKEMHVGHL) carry the 'HIGH' region motif.

The protein belongs to the class-I aminoacyl-tRNA synthetase family.

The protein resides in the plastid. It is found in the chloroplast. Its subcellular location is the mitochondrion. The enzyme catalyses tRNA(Arg) + L-arginine + ATP = L-arginyl-tRNA(Arg) + AMP + diphosphate. Its function is as follows. Forms part of a macromolecular complex that catalyzes the attachment of specific amino acids to cognate tRNAs during protein synthesis. The chain is Arginine--tRNA ligase, chloroplastic/mitochondrial from Arabidopsis thaliana (Mouse-ear cress).